A 452-amino-acid chain; its full sequence is Sensor histidine kinase HprS (452 aa).

At 1-9 the chain is on the cytoplasmic side; it reads MKRLSITVR. The helical transmembrane segment at 10–30 threads the bilayer; the sequence is LTLLFILLLSVAGAGIVWTLY. Residues 31 to 158 lie on the Periplasmic side of the membrane; sequence NGLASELKWR…ARHNMLEQYK (128 aa). The chain crosses the membrane as a helical span at residues 159 to 179; that stretch reads INSIIICIVAIVLCSVLSPLL. Residues 180-452 lie on the Cytoplasmic side of the membrane; sequence IRTGLREIKK…VFRITLPQRN (273 aa). The region spanning 181–234 is the HAMP domain; the sequence is RTGLREIKKLSGVTEALNYNDSREPVEVSALPRELKPLGQALNKMHHALVKDFE. The Histidine kinase domain maps to 242-452; it reads DLAHELRTPI…VFRITLPQRN (211 aa). Histidine 245 is modified (phosphohistidine; by autocatalysis).

Post-translationally, autophosphorylated.

The protein resides in the cell inner membrane. The enzyme catalyses ATP + protein L-histidine = ADP + protein N-phospho-L-histidine.. Functionally, member of a two-component regulatory system HprR/HprS involved in response to hydrogen peroxide. Senses H(2)O(2), maybe via the redox state of the membrane. Activates HprR by phosphorylation. Can also phosphorylate CusR. This is Sensor histidine kinase HprS from Escherichia coli (strain K12).